Consider the following 742-residue polypeptide: Phosphoribosylformylglycinamidine synthase subunit PurL (742 aa).

Histidine 53 is a catalytic residue. Tyrosine 56 and lysine 95 together coordinate ATP. Mg(2+) is bound at residue glutamate 97. Substrate is bound by residues 98-101 (SHNH) and arginine 120. Histidine 99 acts as the Proton acceptor in catalysis. Aspartate 121 contacts Mg(2+). Substrate is bound at residue glutamine 245. Aspartate 275 serves as a coordination point for Mg(2+). 319 to 321 (ESQ) contributes to the substrate binding site. ATP contacts are provided by aspartate 502 and glycine 539. Asparagine 540 provides a ligand contact to Mg(2+). A substrate-binding site is contributed by serine 542.

Belongs to the FGAMS family. Monomer. Part of the FGAM synthase complex composed of 1 PurL, 1 PurQ and 2 PurS subunits.

It localises to the cytoplasm. It carries out the reaction N(2)-formyl-N(1)-(5-phospho-beta-D-ribosyl)glycinamide + L-glutamine + ATP + H2O = 2-formamido-N(1)-(5-O-phospho-beta-D-ribosyl)acetamidine + L-glutamate + ADP + phosphate + H(+). It participates in purine metabolism; IMP biosynthesis via de novo pathway; 5-amino-1-(5-phospho-D-ribosyl)imidazole from N(2)-formyl-N(1)-(5-phospho-D-ribosyl)glycinamide: step 1/2. Part of the phosphoribosylformylglycinamidine synthase complex involved in the purines biosynthetic pathway. Catalyzes the ATP-dependent conversion of formylglycinamide ribonucleotide (FGAR) and glutamine to yield formylglycinamidine ribonucleotide (FGAM) and glutamate. The FGAM synthase complex is composed of three subunits. PurQ produces an ammonia molecule by converting glutamine to glutamate. PurL transfers the ammonia molecule to FGAR to form FGAM in an ATP-dependent manner. PurS interacts with PurQ and PurL and is thought to assist in the transfer of the ammonia molecule from PurQ to PurL. This Lactobacillus acidophilus (strain ATCC 700396 / NCK56 / N2 / NCFM) protein is Phosphoribosylformylglycinamidine synthase subunit PurL.